Reading from the N-terminus, the 386-residue chain is S-adenosylmethionine synthase (386 aa).

Position 17 (H17) interacts with ATP. D19 contacts Mg(2+). E45 contributes to the K(+) binding site. Residues E58 and Q101 each contribute to the L-methionine site. Residues 101-111 are flexible loop; the sequence is QSPDISQGVTE. ATP contacts are provided by residues 168–170, D242, 248–249, A265, and K269; these read DAK and RK. Residue D242 coordinates L-methionine. K273 serves as a coordination point for L-methionine.

It belongs to the AdoMet synthase family. In terms of assembly, homotetramer; dimer of dimers. Mg(2+) serves as cofactor. It depends on K(+) as a cofactor.

Its subcellular location is the cytoplasm. The enzyme catalyses L-methionine + ATP + H2O = S-adenosyl-L-methionine + phosphate + diphosphate. It functions in the pathway amino-acid biosynthesis; S-adenosyl-L-methionine biosynthesis; S-adenosyl-L-methionine from L-methionine: step 1/1. Catalyzes the formation of S-adenosylmethionine (AdoMet) from methionine and ATP. The overall synthetic reaction is composed of two sequential steps, AdoMet formation and the subsequent tripolyphosphate hydrolysis which occurs prior to release of AdoMet from the enzyme. The chain is S-adenosylmethionine synthase from Leptospira interrogans serogroup Icterohaemorrhagiae serovar copenhageni (strain Fiocruz L1-130).